A 136-amino-acid polypeptide reads, in one-letter code: Transcription antitermination protein NusB (136 aa).

The protein belongs to the NusB family.

Functionally, involved in transcription antitermination. Required for transcription of ribosomal RNA (rRNA) genes. Binds specifically to the boxA antiterminator sequence of the ribosomal RNA (rrn) operons. In Paenarthrobacter aurescens (strain TC1), this protein is Transcription antitermination protein NusB.